A 66-amino-acid chain; its full sequence is ATP synthase protein 8 (66 aa).

A helical membrane pass occupies residues 8–24 (PWPMVIMSMILTLFYIT). An N6-acetyllysine; alternate modification is found at lysine 54. An N6-succinyllysine; alternate modification is found at lysine 54. Position 57 is an N6-acetyllysine (lysine 57).

Belongs to the ATPase protein 8 family. As to quaternary structure, F-type ATPases have 2 components, CF(1) - the catalytic core - and CF(0) - the membrane proton channel. Component of an ATP synthase complex composed of ATP5PB, ATP5MC1, ATP5F1E, ATP5PD, ATP5ME, ATP5PF, ATP5MF, MT-ATP6, MT-ATP8, ATP5F1A, ATP5F1B, ATP5F1D, ATP5F1C, ATP5PO, ATP5MG, ATP5MK and ATP5MJ. Interacts with PRICKLE3.

Its subcellular location is the mitochondrion membrane. Its function is as follows. Mitochondrial membrane ATP synthase (F(1)F(0) ATP synthase or Complex V) produces ATP from ADP in the presence of a proton gradient across the membrane which is generated by electron transport complexes of the respiratory chain. F-type ATPases consist of two structural domains, F(1) - containing the extramembraneous catalytic core and F(0) - containing the membrane proton channel, linked together by a central stalk and a peripheral stalk. During catalysis, ATP synthesis in the catalytic domain of F(1) is coupled via a rotary mechanism of the central stalk subunits to proton translocation. Part of the complex F(0) domain. Minor subunit located with subunit a in the membrane. This chain is ATP synthase protein 8 (MT-ATP8), found in Alouatta sara (Bolivian red howler monkey).